A 420-amino-acid chain; its full sequence is Ribosome biogenesis protein WDR12 homolog (420 aa).

Residues 10-92 (VQVHLKTKQE…EDAIEIEYVE (83 aa)) form a ubiquitin-like (UBL) domain region. WD repeat units follow at residues 104-142 (LHDDWVSAVKARGKWILSGCYDNSLNLWTNKGKHILTIS), 143-185 (GHTA…NAVD), 192-231 (GHERGVDSVSVSPDGLRFATGSWDTMLKVWSAELDDGVEG), 250-288 (GHRESVSAVQWMDATTLLTGSWDYTLKVWDLSLEGIKTE), 290-329 (STNKSIFDASYSKLNRLILTASADKNLRLYDPRTNQGSVV), 335-375 (GHNA…APLY), and 379-417 (GHGDKVLDIDWSNPKYIVSGGVDNTVRVFKSRKALAEDT).

This sequence belongs to the WD repeat WDR12/YTM1 family.

The protein localises to the nucleus. Its subcellular location is the nucleolus. It localises to the nucleoplasm. Functionally, required for maturation of ribosomal RNAs and formation of the large ribosomal subunit. The polypeptide is Ribosome biogenesis protein WDR12 homolog (Drosophila sechellia (Fruit fly)).